The primary structure comprises 357 residues: tRNA-specific 2-thiouridylase MnmA (357 aa).

ATP is bound by residues 6–13 and Leu-32; that span reads AMSGGVDS. Catalysis depends on Cys-101, which acts as the Nucleophile. A disulfide bond links Cys-101 and Cys-193. Residue Gly-125 coordinates ATP. The segment at 143-145 is interaction with tRNA; it reads KDQ. The active-site Cysteine persulfide intermediate is Cys-193.

It belongs to the MnmA/TRMU family.

It is found in the cytoplasm. The enzyme catalyses S-sulfanyl-L-cysteinyl-[protein] + uridine(34) in tRNA + AH2 + ATP = 2-thiouridine(34) in tRNA + L-cysteinyl-[protein] + A + AMP + diphosphate + H(+). Its function is as follows. Catalyzes the 2-thiolation of uridine at the wobble position (U34) of tRNA, leading to the formation of s(2)U34. This is tRNA-specific 2-thiouridylase MnmA from Mycolicibacterium gilvum (strain PYR-GCK) (Mycobacterium gilvum (strain PYR-GCK)).